A 301-amino-acid polypeptide reads, in one-letter code: Porphobilinogen deaminase (301 aa).

S-(dipyrrolylmethanemethyl)cysteine is present on cysteine 235.

It belongs to the HMBS family. In terms of assembly, monomer. Requires dipyrromethane as cofactor.

It carries out the reaction 4 porphobilinogen + H2O = hydroxymethylbilane + 4 NH4(+). It participates in porphyrin-containing compound metabolism; protoporphyrin-IX biosynthesis; coproporphyrinogen-III from 5-aminolevulinate: step 2/4. Functionally, tetrapolymerization of the monopyrrole PBG into the hydroxymethylbilane pre-uroporphyrinogen in several discrete steps. The polypeptide is Porphobilinogen deaminase (Thermus thermophilus (strain ATCC BAA-163 / DSM 7039 / HB27)).